Reading from the N-terminus, the 534-residue chain is Protein tweety homolog 2 (534 aa).

Residues 1-44 (MQAARVDYIAPWWVVWLHSVPHVGLRLQPVNSTFSPGDESYQES) are Extracellular-facing. Residue Asn31 is glycosylated (N-linked (GlcNAc...) asparagine). A helical membrane pass occupies residues 45 to 65 (LLFLGLVAAVCLGLNLIFLVA). Residues 66–87 (YLVCACHCRRDDAVQTKQHHSC) are Cytoplasmic-facing. The chain crosses the membrane as a helical span at residues 88–108 (CITWTAVVAGLICCAAVGVGF). Over 109 to 213 (YGNSETNDGA…QTGYVEYYRW (105 aa)) the chain is Extracellular. Ca(2+) contacts are provided by Glu113 and Asp116. Residue Asn129 is glycosylated (N-linked (GlcNAc) asparagine). Positions 164-166 (RGD) match the RGD motif. At Thr199 the chain carries Phosphothreonine. The helical transmembrane segment at 214–234 (LSYLLLFILDLVICLIACLGL) threads the bilayer. Residues 235 to 240 (AKRSKC) are Cytoplasmic-facing. A helical transmembrane segment spans residues 241 to 261 (LLASMLCCGALSLLLSWASLA). The Extracellular portion of the chain corresponds to 262–388 (ADGSAAVATS…AGICYDGLQG (127 aa)). Cystine bridges form between Cys274–Cys382 and Cys300–Cys367. Residue Asn283 is glycosylated (N-linked (GlcNAc...) asparagine). Asn352 carries an N-linked (GlcNAc) asparagine glycan. A helical membrane pass occupies residues 389–409 (LLYLGLFSFLAALAFSTMICA). Topologically, residues 410–534 (GPRAWKHFTT…LRHYGNQFPA (125 aa)) are cytoplasmic. A Phosphoserine modification is found at Ser504. The short motif at 506–509 (PPTY) is the PY-motif; mediates interaction with NEDD4L element.

The protein belongs to the tweety family. In terms of assembly, homodimer. Forms cis-homodimers in the presence of Ca(+2) and forms monomers and trans-dimers in the absence of Ca(2+). Interacts with NEDD4L. In terms of processing, N- Glycosylated. Contains high-mannose, hybrid and complex oligosaccharides. Ubiquitinated by NEDD4L, leading to its proteasomal degradation. In terms of tissue distribution, expressed at higher level in brain and testis and at lower levels in heart, ovary, spleen and peripheral blood leukocytes. Up-regulated in 13 of 16 renal cell carcinoma samples examined. Up-regulated in colon carcinoma.

Its subcellular location is the cell membrane. It carries out the reaction chloride(in) = chloride(out). The catalysed reaction is L-glutamate(out) = L-glutamate(in). Calcium-independent, swelling-dependent volume-regulated anion channel (VRAC-swell) which plays a pivotal role in the process of regulatory volume decrease (RVD) in the brain through the efflux of anions like chloride and organic osmolytes like glutamate. Probable large-conductance Ca(2+)-activated chloride channel. The chain is Protein tweety homolog 2 (TTYH2) from Homo sapiens (Human).